A 391-amino-acid polypeptide reads, in one-letter code: Succinate--CoA ligase [ADP-forming] subunit beta (391 aa).

The region spanning 9 to 248 is the ATP-grasp domain; sequence KDILRKFGVS…TGEEDPFEVE (240 aa). ATP contacts are provided by residues lysine 50, 57 to 59, glutamate 103, methionine 106, and glutamate 111; that span reads GRG. Residues asparagine 203 and aspartate 217 each coordinate Mg(2+). Substrate is bound by residues asparagine 268 and 325 to 327; that span reads GIV.

It belongs to the succinate/malate CoA ligase beta subunit family. Heterotetramer of two alpha and two beta subunits. The cofactor is Mg(2+).

It carries out the reaction succinate + ATP + CoA = succinyl-CoA + ADP + phosphate. It catalyses the reaction GTP + succinate + CoA = succinyl-CoA + GDP + phosphate. Its pathway is carbohydrate metabolism; tricarboxylic acid cycle; succinate from succinyl-CoA (ligase route): step 1/1. Succinyl-CoA synthetase functions in the citric acid cycle (TCA), coupling the hydrolysis of succinyl-CoA to the synthesis of either ATP or GTP and thus represents the only step of substrate-level phosphorylation in the TCA. The beta subunit provides nucleotide specificity of the enzyme and binds the substrate succinate, while the binding sites for coenzyme A and phosphate are found in the alpha subunit. In Chlorobium phaeobacteroides (strain BS1), this protein is Succinate--CoA ligase [ADP-forming] subunit beta.